The chain runs to 140 residues: Truncated tyrosine phosphatase D1 (140 aa).

One can recognise a Tyrosine-protein phosphatase domain in the interval 1–140; sequence MRRPNCIAEI…SAQWIQFLKK (140 aa).

It belongs to the protein-tyrosine phosphatase family.

In Microplitis demolitor bracovirus (isolate Webb) (MdBV), this protein is Truncated tyrosine phosphatase D1 (D1).